Reading from the N-terminus, the 341-residue chain is Tubulin-specific chaperone C (341 aa).

Methionine 1 is subject to N-acetylmethionine. Residues 34 to 49 (ERQIEVERRKQKRQDQ) are compositionally biased toward basic and acidic residues. The disordered stretch occupies residues 34–55 (ERQIEVERRKQKRQDQEVEEEK). At serine 79 the chain carries Phosphoserine. A disordered region spans residues 148-173 (TAQVDAAPVTSAAPSPPVTKEEEGAP). In terms of domain architecture, C-CAP/cofactor C-like spans 163–318 (PPVTKEEEGA…NWDQVDDFNW (156 aa)).

It belongs to the TBCC family. Supercomplex made of cofactors A to E. Cofactors A and D function by capturing and stabilizing tubulin in a quasi-native conformation. Cofactor E binds to the cofactor D-tubulin complex; interaction with cofactor C then causes the release of tubulin polypeptides that are committed to the native state.

The protein resides in the cytoplasm. Its function is as follows. Tubulin-folding protein; involved in the final step of the tubulin folding pathway. The sequence is that of Tubulin-specific chaperone C (Tbcc) from Mus musculus (Mouse).